The primary structure comprises 210 residues: Thymidylate kinase (210 aa).

A dGMP-binding site is contributed by aspartate 17. Aspartate 17 provides a ligand contact to dTMP. 6 residues coordinate ATP: arginine 18, serine 19, glycine 20, lysine 21, serine 22, and threonine 23. Residues arginine 47, phenylalanine 74, arginine 78, arginine 99, and tyrosine 107 each coordinate dTMP. DGMP contacts are provided by phenylalanine 74, arginine 78, arginine 99, tyrosine 107, serine 108, and tyrosine 153. An LID region spans residues 143 to 155; it reads QNRSDYGEEIYEK. ATP is bound at residue arginine 182.

It belongs to the thymidylate kinase family. Homodimer. Binds two dTMP molecules per dimer. Binds only one dTGP molecule per dimer.

The enzyme catalyses dTMP + ATP = dTDP + ADP. It catalyses the reaction dGMP + ATP = dGDP + ADP. It participates in pyrimidine metabolism; dTTP biosynthesis. With respect to regulation, inhibited by deoxyguanosine (dG), deoxythymidine (dT) and azidothymidine (AZT). In terms of biological role, catalyzes the phosphorylation of thymidine monophosphate (dTMP) to thymidine diphosphate (dTDP), the immediate precursor for the DNA building block dTTP. Can also phosphorylate dGMP and to a lesser extent GMP, dUMP and dIMP. Can use either ATP or dATP as phosphate donors in presence of Mg(2+). The sequence is that of Thymidylate kinase from Plasmodium falciparum (isolate 3D7).